Reading from the N-terminus, the 488-residue chain is Probable malate:quinone oxidoreductase (488 aa).

Belongs to the MQO family. The cofactor is FAD.

The enzyme catalyses (S)-malate + a quinone = a quinol + oxaloacetate. Its pathway is carbohydrate metabolism; tricarboxylic acid cycle; oxaloacetate from (S)-malate (quinone route): step 1/1. The protein is Probable malate:quinone oxidoreductase of Neisseria gonorrhoeae (strain ATCC 700825 / FA 1090).